The primary structure comprises 190 residues: Adenylate kinase (190 aa).

Gly11 to Thr16 contacts ATP. Positions Ser31–Val60 are NMP. AMP is bound by residues Thr32, Arg37, Gln58 to Val60, Gly86 to Arg89, and Gln93. The tract at residues Glu127 to Asp137 is LID. Arg128 lines the ATP pocket. AMP-binding residues include Arg134 and Arg145. ATP is bound at residue Gly173.

Belongs to the adenylate kinase family. As to quaternary structure, monomer.

It localises to the cytoplasm. The enzyme catalyses AMP + ATP = 2 ADP. Its pathway is purine metabolism; AMP biosynthesis via salvage pathway; AMP from ADP: step 1/1. Functionally, catalyzes the reversible transfer of the terminal phosphate group between ATP and AMP. Plays an important role in cellular energy homeostasis and in adenine nucleotide metabolism. The sequence is that of Adenylate kinase from Parabacteroides distasonis (strain ATCC 8503 / DSM 20701 / CIP 104284 / JCM 5825 / NCTC 11152).